The sequence spans 98 residues: YcgL domain-containing protein Ping_1076 (98 aa).

Residues 1–85 enclose the YcgL domain; the sequence is MLCAVYKSIR…PPVNHLQEHK (85 aa). Residues 75 to 98 form a disordered region; the sequence is PPPVNHLQEHKDWKKKRQENKNEI.

The polypeptide is YcgL domain-containing protein Ping_1076 (Psychromonas ingrahamii (strain DSM 17664 / CCUG 51855 / 37)).